Here is a 416-residue protein sequence, read N- to C-terminus: Thyroid hormone receptor alpha (416 aa).

Residues 1–30 (MEPISNVEDPNSSEGDEKRWPDGPKRKRKN) are disordered. The interval 1-58 (MEPISNVEDPNSSEGDEKRWPDGPKRKRKNSTCSVKSMSALSLSVQGYIPSYLEKDEP) is modulating. Basic and acidic residues predominate over residues 15-24 (GDEKRWPDGP). Zn(2+)-binding residues include cysteine 59, cysteine 62, cysteine 76, cysteine 79, cysteine 97, cysteine 103, cysteine 113, and cysteine 116. 2 consecutive NR C4-type zinc fingers follow at residues 59–79 (CVVCGDKATGYHYRCITCEGC) and 97–121 (CKYDGCCIIDKITRNQCQLCRFRKC). The nuclear receptor DNA-binding region spans 59–133 (CVVCGDKATG…VCMAMDLVLD (75 aa)). Positions 169 to 413 (SEWELIRHVT…PPLFLEVFED (245 aa)) constitute an NR LBD domain. Residues arginine 234 and serine 283 each contribute to the 3,3',5-triiodo-L-thyronine site.

Belongs to the nuclear hormone receptor family. NR1 subfamily.

The protein resides in the nucleus. Functionally, nuclear hormone receptor that can act as a repressor or activator of transcription. High affinity receptor for thyroid hormones, including triiodothyronine and thyroxine. This chain is Thyroid hormone receptor alpha (thra1), found in Salmo salar (Atlantic salmon).